The following is a 190-amino-acid chain: Holliday junction branch migration complex subunit RuvA (190 aa).

The interval 1–64 (MIGKLTGTLL…EDAQLLYGFG (64 aa)) is domain I. The interval 65–143 (THSERQAFRE…ADTGAQSLFV (79 aa)) is domain II. Residues 144 to 148 (NNDQN) are flexible linker. The interval 148–190 (NDIVQALMALGYSDKDAAAALKKLPPDVGVTEGIKLALKALAK) is domain III.

It belongs to the RuvA family. In terms of assembly, homotetramer. Forms an RuvA(8)-RuvB(12)-Holliday junction (HJ) complex. HJ DNA is sandwiched between 2 RuvA tetramers; dsDNA enters through RuvA and exits via RuvB. An RuvB hexamer assembles on each DNA strand where it exits the tetramer. Each RuvB hexamer is contacted by two RuvA subunits (via domain III) on 2 adjacent RuvB subunits; this complex drives branch migration. In the full resolvosome a probable DNA-RuvA(4)-RuvB(12)-RuvC(2) complex forms which resolves the HJ.

Its subcellular location is the cytoplasm. Its function is as follows. The RuvA-RuvB-RuvC complex processes Holliday junction (HJ) DNA during genetic recombination and DNA repair, while the RuvA-RuvB complex plays an important role in the rescue of blocked DNA replication forks via replication fork reversal (RFR). RuvA specifically binds to HJ cruciform DNA, conferring on it an open structure. The RuvB hexamer acts as an ATP-dependent pump, pulling dsDNA into and through the RuvAB complex. HJ branch migration allows RuvC to scan DNA until it finds its consensus sequence, where it cleaves and resolves the cruciform DNA. This chain is Holliday junction branch migration complex subunit RuvA, found in Delftia acidovorans (strain DSM 14801 / SPH-1).